We begin with the raw amino-acid sequence, 388 residues long: Methylthioribose-1-phosphate isomerase (388 aa).

Aspartate 253 functions as the Proton donor in the catalytic mechanism.

It belongs to the eIF-2B alpha/beta/delta subunits family. MtnA subfamily.

It is found in the cytoplasm. The protein resides in the nucleus. The catalysed reaction is 5-(methylsulfanyl)-alpha-D-ribose 1-phosphate = 5-(methylsulfanyl)-D-ribulose 1-phosphate. It functions in the pathway amino-acid biosynthesis; L-methionine biosynthesis via salvage pathway; L-methionine from S-methyl-5-thio-alpha-D-ribose 1-phosphate: step 1/6. Catalyzes the interconversion of methylthioribose-1-phosphate (MTR-1-P) into methylthioribulose-1-phosphate (MTRu-1-P). The sequence is that of Methylthioribose-1-phosphate isomerase from Fusarium vanettenii (strain ATCC MYA-4622 / CBS 123669 / FGSC 9596 / NRRL 45880 / 77-13-4) (Fusarium solani subsp. pisi).